The primary structure comprises 202 residues: Pyridoxal 5'-phosphate synthase subunit PdxT (202 aa).

49–51 is an L-glutamine binding site; that stretch reads GES. C81 acts as the Nucleophile in catalysis. L-glutamine contacts are provided by residues R110 and 139 to 140; that span reads IR. Residues H182 and E184 each act as charge relay system in the active site.

It belongs to the glutaminase PdxT/SNO family. In terms of assembly, in the presence of PdxS, forms a dodecamer of heterodimers. Only shows activity in the heterodimer.

It catalyses the reaction aldehydo-D-ribose 5-phosphate + D-glyceraldehyde 3-phosphate + L-glutamine = pyridoxal 5'-phosphate + L-glutamate + phosphate + 3 H2O + H(+). It carries out the reaction L-glutamine + H2O = L-glutamate + NH4(+). It functions in the pathway cofactor biosynthesis; pyridoxal 5'-phosphate biosynthesis. In terms of biological role, catalyzes the hydrolysis of glutamine to glutamate and ammonia as part of the biosynthesis of pyridoxal 5'-phosphate. The resulting ammonia molecule is channeled to the active site of PdxS. The chain is Pyridoxal 5'-phosphate synthase subunit PdxT from Rhodococcus jostii (strain RHA1).